A 743-amino-acid chain; its full sequence is Photosystem I P700 chlorophyll a apoprotein A2 (743 aa).

The next 8 membrane-spanning stretches (helical) occupy residues 46-69, 135-158, 175-199, 273-291, 336-359, 375-401, 423-445, and 526-544; these read IFATHFGHVAIIFLWASSLLFHVA, LYMGAVFLLILASVFLFAGWLHLQ, LNHHLAGLFGVSSLAWAGHLIHVAI, MAHHHLAIAVIFIIAGHMY, LHFQLGIHLAALGTITSLVAQHMY, AALYTHHQYIAIFLMLGAFAHGAIFWV, AIISHLSWVSLFLGFHTLGLYVH, and FLVHHAFALALHTTVLILV. [4Fe-4S] cluster contacts are provided by Cys568 and Cys577. 2 helical membrane passes run 584–605 and 652–674; these read AFYLATFWALNTVGWVTFYWHW and LSVWAWMFLFGHLVWATGFMFLI. Positions 663, 671, and 679 each coordinate chlorophyll a. Position 680 (Trp680) interacts with phylloquinone. The chain crosses the membrane as a helical span at residues 716-736; the sequence is LVGLTHFTVGYVLTYAAFLIA.

It belongs to the PsaA/PsaB family. In terms of assembly, the PsaA/B heterodimer binds the P700 chlorophyll special pair and subsequent electron acceptors. PSI consists of a core antenna complex that captures photons, and an electron transfer chain that converts photonic excitation into a charge separation. The cyanobacterial PSI reaction center is composed of one copy each of PsaA,B,C,D,E,F,I,J,K,L,M and X, and forms trimeric complexes. It depends on PSI electron transfer chain: 5 chlorophyll a, 1 chlorophyll a', 2 phylloquinones and 3 4Fe-4S clusters. PSI core antenna: 90 chlorophyll a, 22 carotenoids, 3 phospholipids and 1 galactolipid. P700 is a chlorophyll a/chlorophyll a' dimer, A0 is one or more chlorophyll a, A1 is one or both phylloquinones and FX is a shared 4Fe-4S iron-sulfur center. as a cofactor.

Its subcellular location is the cellular thylakoid membrane. It carries out the reaction reduced [plastocyanin] + hnu + oxidized [2Fe-2S]-[ferredoxin] = oxidized [plastocyanin] + reduced [2Fe-2S]-[ferredoxin]. In terms of biological role, psaA and PsaB bind P700, the primary electron donor of photosystem I (PSI), as well as the electron acceptors A0, A1 and FX. PSI is a plastocyanin/cytochrome c6-ferredoxin oxidoreductase, converting photonic excitation into a charge separation, which transfers an electron from the donor P700 chlorophyll pair to the spectroscopically characterized acceptors A0, A1, FX, FA and FB in turn. Oxidized P700 is reduced on the lumenal side of the thylakoid membrane by plastocyanin or cytochrome c6. This Mastigocladus laminosus (Fischerella sp.) protein is Photosystem I P700 chlorophyll a apoprotein A2.